Consider the following 459-residue polypeptide: Protein maelstrom (459 aa).

A DNA-binding region (HMG box) is located at residues 2 to 69; the sequence is APKKHSGFMM…AQRAKRESSN (68 aa). A disordered region spans residues 43–78; the sequence is NTQQRGPYNSGGKDANVAQRAKRESSNGHGQVDKAQ. Over residues 63–78 the composition is skewed to basic and acidic residues; the sequence is AKRESSNGHGQVDKAQ.

Belongs to the maelstrom family. As to expression, in germaria and egg chambers, it is detected in the germline. In the germarium, it is in all regions, including region I where the germ cells are dividing. In early egg chambers, it is uniformly distributed throughout the nurse cells and oocyte but, by stage 5, it is most concentrated around the outer margins of the cells, closest to the periphery of the egg chamber. Level decreases in stages 5 and 6, but most noticeably in the oocyte, where protein level remains. No detectable protein from stage 8 onward (at protein level).

Its subcellular location is the cytoplasm. It localises to the nucleus. The protein resides in the perinuclear region. It is found in the cytoplasmic ribonucleoprotein granule. Functionally, involved both in the piRNA and miRNA metabolic processes. As a component of the meiotic nuage, plays a central role during oogenesis by repressing transposable elements and preventing their mobilization, which is essential for the germline integrity. Repression of transposable elements is mediated via the piRNA metabolic process, which mediates the repression of transposable elements during meiosis by forming complexes composed of piRNAs and Piwi proteins and governs the repression of transposons. As a nuclear component, it is required for proper differentiation in the germline stem cell (GSC) lineage by repressing microRNA-7 (miR-7), thereby acting as an indirect regulator of bag-of-marbles (Bam). Acts by binding to the promoter of miR-7 gene and repressing its expression; miR-7 repression alleviates the Bam repression by miR-7, thereby allowing differentiation in the germline stem cell (GSC) lineage. Indirectly required to position the microtubule organizing center in stage 2-6 oocytes. Involved in repression of long interspersed nuclear elements (LINEs) including HeT-A, I-element, TART and possibly mst40 LINEs; may have a role in production of piwi-interacting RNA (piRNA). This is Protein maelstrom from Drosophila melanogaster (Fruit fly).